The primary structure comprises 817 residues: MALTSQSLFFSPLAAGPSRRVRGRGRSTSVSAAASASSHNSQPHGHPQQPLAVASSSSKSESKGSKTFALASAITAAASGAFLLASSGGGFGGGAGGPLGGGGGGWGAGGGGGGGGGGGGGGFWSRIFSGGAAHADEKSSGDWDPHGLPANINVPMTKLSGLKRYKISELKFFDRAAGGGGAFTGPEDSFFEMVTLQPGGVYTKSQLLKELETLVSCGMFERVDLEGKAKPDGTLGLTVSFVESVWSAAKQFKCINVGLMSQSGQVDFDQDMTEREKMDYLRKQERDYQQRVRGAKPCILPDNVRGEVLGMMKKQEKVSARLLQRIRDHVQKWYHNEGFVCAQVVNFGNLNTSEVVCEVVEGDITKVEYQFQDKLGNFVEGNTQIPIIDRELPQQLRPGHIFNIGAGKQALKNINSLALFSNIEVNPRPDETKEGGIVVEIKLKELEPKSAEVSTEWSIVPGREGRPTLASIQPGGTVSFEHRNIYGLNRSIVGSVTSSNLLNPQDDLSFKLEYVHPYLDGVDDRNKNRTFKTSCFNTRKLSPVFVAGPNMDEAPPVWVDRVGFKANITESFTRQSKFTYGLVVEEITTRDETNSICTHGSRAMPSGGLSMDGPPTTLSGTGIDRMAFLQANITRDNTEFVNGAVIGDRCIFQLDQGLGIGSKNPFFNRHQLTLTKFVNLNKQEKGAGKPLPAVLVLHGHYAGCVGDLPSYDAFTLGGPYSVRGYGMGELGASRNVLEVASELRIPVRNTYVYGFVEHGTDLGSSKDVKGNPTEFFRRVGHGSSYGLGVKLGLVRGEYIVDHNAGTGTVFFRFGERF.

The N-terminal 31 residues, methionine 1 to serine 31, are a transit peptide targeting the chloroplast. The disordered stretch occupies residues alanine 14–lysine 59. The span at arginine 26–serine 38 shows a compositional bias: low complexity. Residues alanine 32–alanine 135 constitute a chloroplast; outer membrane transit peptide. The Chloroplast intermembrane portion of the chain corresponds to aspartate 136–glycine 147. A beta stranded membrane pass occupies residues leucine 148–methionine 156. Topologically, residues threonine 157 to arginine 164 are cytoplasmic. The beta stranded transmembrane segment at tyrosine 165 to phenylalanine 173 threads the bilayer. Over aspartate 174–aspartate 232 the chain is Chloroplast intermembrane. The chain crosses the membrane as a beta stranded span at residues glycine 233 to phenylalanine 241. Topologically, residues valine 242–cysteine 254 are cytoplasmic. The beta stranded transmembrane segment at isoleucine 255–serine 261 threads the bilayer. The Chloroplast intermembrane portion of the chain corresponds to glutamine 262–isoleucine 364. Residues threonine 365–glutamine 372 traverse the membrane as a beta stranded segment. The Cytoplasmic segment spans residues aspartate 373–leucine 417. The chain crosses the membrane as a beta stranded span at residues alanine 418 to valine 425. The Chloroplast intermembrane segment spans residues asparagine 426–glutamate 434. Residues glycine 435–leucine 443 traverse the membrane as a beta stranded segment. Over lysine 444 to lysine 449 the chain is Cytoplasmic. Residues serine 450–isoleucine 459 form a beta stranded membrane-spanning segment. The Chloroplast intermembrane segment spans residues valine 460 to serine 471. The beta stranded transmembrane segment at isoleucine 472–phenylalanine 480 threads the bilayer. The Cytoplasmic portion of the chain corresponds to glutamate 481 to aspartate 507. Residues leucine 508–histidine 516 form a beta stranded membrane-spanning segment. Topologically, residues proline 517–arginine 561 are chloroplast intermembrane. The chain crosses the membrane as a beta stranded span at residues valine 562–threonine 569. Residues glutamate 570–lysine 577 are Cytoplasmic-facing. A beta stranded transmembrane segment spans residues phenylalanine 578–glutamate 585. Over glutamate 586–proline 692 the chain is Chloroplast intermembrane. The beta stranded transmembrane segment at alanine 693–tyrosine 701 threads the bilayer. At alanine 702 to alanine 713 the chain is on the cytoplasmic side. The chain crosses the membrane as a beta stranded span at residues phenylalanine 714–valine 722. Over arginine 723–serine 784 the chain is Chloroplast intermembrane. A beta stranded transmembrane segment spans residues tyrosine 785–leucine 791. The Cytoplasmic segment spans residues glycine 792–glycine 805. Residues threonine 806–phenylalanine 813 form a beta stranded membrane-spanning segment. Topologically, residues glycine 814–phenylalanine 817 are chloroplast intermembrane.

It belongs to the TOC75 family. As to quaternary structure, part of the TOC core complex that includes a protein for the specific recognition of transit peptides surrounded by a ring composed of four proteins forming translocation channels, and four to five GTP-binding proteins providing energy. This core complex can interact with components of the TIC complex to form a larger import complex. Chloroplastic protein precursors also interact with these complexes.

Its subcellular location is the plastid. It localises to the chloroplast outer membrane. Functionally, mediates the insertion of proteins targeted to the outer membrane of chloroplasts. Required for the import of protein precursors into chloroplasts. Forms the voltage-dependent preprotein translocation channels (hydrophilic beta barrel) of the TOC complex in the chloroplastic outer membrane. This is Protein TOC75, chloroplastic (TOC75) from Oryza sativa subsp. japonica (Rice).